Here is a 166-residue protein sequence, read N- to C-terminus: MANNEQKRDEGYIEKLVQVNRVAKTVKGGRIFAFTALTVVGDGKGRVGFGRGKAREVPAAIQKAMEAARRNMIQVDLNGTTLQYPTKSAHGASKVYMQPASEGTGIIAGGAMRAVLEVAGVQNVLAKCYGSTNPVNVVYATFKGLKNMQAPEAVAAKRGKSVEEIL.

Residues tyrosine 12–valine 75 form the S5 DRBM domain.

The protein belongs to the universal ribosomal protein uS5 family. In terms of assembly, part of the 30S ribosomal subunit. Contacts proteins S4 and S8.

With S4 and S12 plays an important role in translational accuracy. Functionally, located at the back of the 30S subunit body where it stabilizes the conformation of the head with respect to the body. The polypeptide is Small ribosomal subunit protein uS5 (Pseudomonas aeruginosa (strain LESB58)).